Here is a 327-residue protein sequence, read N- to C-terminus: Ribonucleoside-diphosphate reductase small chain (327 aa).

3 residues coordinate Fe cation: Asp70, Glu101, and His104. Residue Tyr108 is part of the active site. Positions 164, 198, and 201 each coordinate Fe cation.

This sequence belongs to the ribonucleoside diphosphate reductase small chain family. Heterotetramer composed of a homodimer of the large subunit (R1) and a homodimer of the small subunit (R2). Larger multisubunit protein complex are also active, composed of (R1)n(R2)n. Requires Fe cation as cofactor.

It catalyses the reaction a 2'-deoxyribonucleoside 5'-diphosphate + [thioredoxin]-disulfide + H2O = a ribonucleoside 5'-diphosphate + [thioredoxin]-dithiol. Its function is as follows. Ribonucleoside-diphosphate reductase holoenzyme provides the precursors necessary for viral DNA synthesis. Allows virus growth in non-dividing cells. Catalyzes the biosynthesis of deoxyribonucleotides from the corresponding ribonucleotides. The polypeptide is Ribonucleoside-diphosphate reductase small chain (African swine fever virus (isolate Tick/South Africa/Pretoriuskop Pr4/1996) (ASFV)).